The sequence spans 191 residues: Ankyrin repeat domain-containing protein 22 (191 aa).

ANK repeat units lie at residues 39–68 (NGDTPLICACRRGHVRIVSFLLRRNANVNL), 72–100 (KERTCLHYAVKKKFTFIDYLLIILLMPVL), 101–130 (LIGYFLMVSKTKQNEALVRMLLDAGVEVNA), and 134–163 (YGCTALHYACEMKNQSLIPLLLEARADPTI).

The polypeptide is Ankyrin repeat domain-containing protein 22 (ANKRD22) (Homo sapiens (Human)).